The following is a 798-amino-acid chain: Bromodomain-containing protein 2 (798 aa).

Position 1 is an N-acetylmethionine (Met1). The interval 1–21 is disordered; that stretch reads MLQNVTPHKLPGEGNAGLLGL. Thr6 is modified (phosphothreonine). Ser36 carries the post-translational modification Phosphoserine. The disordered stretch occupies residues 53-72; sequence LQLAPANPPPPEVSNPKKPG. The 107-residue stretch at 73–179 folds into the Bromo 1 domain; that stretch reads RVTNQLQYLH…KIFLQKVASM (107 aa). Residues Asp111, Tyr154, Asn155, Lys156, Asp159, and Asp160 each coordinate a protein. 3 disordered regions span residues 267–348, 454–645, and 736–798; these read PPAQ…LSEQ, DEPL…YDEK, and KRLQ…SDSG. The span at 284–297 shows a compositional bias: low complexity; that stretch reads TTTPTPTAILAPGS. A phosphoserine mark is found at Ser297, Ser300, and Ser304. The span at 315-331 shows a compositional bias: basic and acidic residues; the sequence is MRRESGRPIKPPRKDLP. In terms of domain architecture, Bromo 2 spans 343-452; the sequence is GKLSEQLKHC…DVFEFRYAKM (110 aa). Residues 480 to 512 show a composition bias toward acidic residues; that stretch reads SSEESSSESSSEEEEEEEEDEDEEESESSDSEE. Over residues 542-564 the composition is skewed to basic residues; sequence KPKRKREKKEKKKKRKAEKHRGR. A Nuclear localization signal motif is present at residues 553–557; it reads KKKRK. The 83-residue stretch at 630-712 folds into the NET domain; sequence DSEEEEESRP…SCLRKKPRKP (83 aa). Ser631 bears the Phosphoserine mark. Positions 772–792 are enriched in low complexity; it reads SASSSSSDSSSSSSSSSSSDT.

This sequence belongs to the BET family. As to quaternary structure, homodimer. Interacts with E2F1. Interacts with (acetylated) STAT3; promoting STAT3 recruitment to chromatin. Interacts with CTCF; promoting BRD2 recruitment to chromatin. In terms of tissue distribution, predominantly expressed in the testis, followed by ovary, placenta, embryo and to a lower extent in somatic tissues.

It is found in the nucleus. The protein resides in the chromosome. Its function is as follows. Chromatin reader protein that specifically recognizes and binds histone H4 acetylated at 'Lys-5' and 'Lys-12' (H4K5ac and H4K12ac, respectively), thereby controlling gene expression and remodeling chromatin structures. Recruits transcription factors and coactivators to target gene sites, and activates RNA polymerase II machinery for transcriptional elongation. Plays a key role in genome compartmentalization via its association with CTCF and cohesin: recruited to chromatin by CTCF and promotes formation of topologically associating domains (TADs) via its ability to bind acetylated histones, contributing to CTCF boundary formation and enhancer insulation. Also recognizes and binds acetylated non-histone proteins, such as STAT3. Involved in inflammatory response by regulating differentiation of naive CD4(+) T-cells into T-helper Th17: recognizes and binds STAT3 acetylated at 'Lys-87', promoting STAT3 recruitment to chromatin. In addition to acetylated lysines, also recognizes and binds lysine residues on histones that are both methylated and acetylated on the same side chain to form N6-acetyl-N6-methyllysine (Kacme), an epigenetic mark of active chromatin associated with increased transcriptional initiation. Specifically binds histone H4 acetyl-methylated at 'Lys-5' and 'Lys-12' (H4K5acme and H4K12acme, respectively). The chain is Bromodomain-containing protein 2 from Mus musculus (Mouse).